The chain runs to 191 residues: Fe/S biogenesis protein NfuA (191 aa).

2 residues coordinate [4Fe-4S] cluster: cysteine 149 and cysteine 152.

It belongs to the NfuA family. In terms of assembly, homodimer. [4Fe-4S] cluster serves as cofactor.

Functionally, involved in iron-sulfur cluster biogenesis. Binds a 4Fe-4S cluster, can transfer this cluster to apoproteins, and thereby intervenes in the maturation of Fe/S proteins. Could also act as a scaffold/chaperone for damaged Fe/S proteins. The protein is Fe/S biogenesis protein NfuA of Enterobacter sp. (strain 638).